The chain runs to 324 residues: Putative divalent cation/proton antiporter TMEM165 (324 aa).

Residues 1-33 form the signal peptide; sequence MAAAAPGNGRASAPRLLLLFLVPLLWAPAAVRA. Residues 34-89 are Lumenal-facing; that stretch reads GPDEDLSHRNKEPPAPAQQLQPQPVAVQGPEPARVEKIFTPAAPVHTNKEDPATQT. The span at 35 to 45 shows a compositional bias: basic and acidic residues; that stretch reads PDEDLSHRNKE. The tract at residues 35–59 is disordered; the sequence is PDEDLSHRNKEPPAPAQQLQPQPVA. Over residues 50–59 the composition is skewed to low complexity; the sequence is AQQLQPQPVA. A helical membrane pass occupies residues 90–110; it reads NLGFIHAFVAAISVIIVSELG. Topologically, residues 111-126 are cytoplasmic; that stretch reads DKTFFIAAIMAMRYNR. The chain crosses the membrane as a helical span at residues 127 to 147; it reads LTVLAGAMLALGLMTCLSVLF. Residues 148 to 151 lie on the Lumenal side of the membrane; the sequence is GYAT. A helical membrane pass occupies residues 152–172; that stretch reads TVIPRVYTYYVSTVLFAIFGI. Over 173–228 the chain is Cytoplasmic; that stretch reads RMLREGLKMSPDEGQEELEEVQAELKKKDEEFQRTKLLNGPGDVETGTSITVPQKK. Residues 184-211 are a coiled coil; sequence DEGQEELEEVQAELKKKDEEFQRTKLLN. Residues 229 to 249 traverse the membrane as a helical segment; sequence WLHFISPIFVQALTLTFLAEW. Topologically, residues 250-267 are lumenal; the sequence is GDRSQLTTIVLAAREDPY. A helical membrane pass occupies residues 268–288; the sequence is GVAVGGTVGHCLCTGLAVIGG. At 289-299 the chain is on the cytoplasmic side; the sequence is RMIAQKISVRT. The chain crosses the membrane as a helical span at residues 300–320; sequence VTIIGGIVFLAFAFSALFISP. Over 321–324 the chain is Lumenal; it reads DSGF.

Belongs to the GDT1 family. Ubiquitously expressed.

It localises to the golgi apparatus membrane. The catalysed reaction is Ca(2+)(in) + n H(+)(out) = Ca(2+)(out) + n H(+)(in). It catalyses the reaction Mn(2+)(in) + n H(+)(out) = Mn(2+)(out) + n H(+)(in). Putative divalent cation:proton antiporter that exchanges calcium or manganese ions for protons across the Golgi membrane. Mediates the reversible transport of calcium or manganese to the Golgi lumen driven by the proton gradient and possibly the membrane potential generated by V-ATPase. Provides calcium or manganese cofactors to resident Golgi enzymes and contributes to the maintenance of an acidic luminal Golgi pH required for proper functioning of the secretory pathway. Promotes Ca(2+) storage within the Golgi lumen of the mammary epithelial cells to be then secreted into milk. The transport mechanism and stoichiometry remains to be elucidated. In Homo sapiens (Human), this protein is Putative divalent cation/proton antiporter TMEM165.